Here is a 545-residue protein sequence, read N- to C-terminus: Ribulokinase (545 aa).

It belongs to the ribulokinase family.

It catalyses the reaction D-ribulose + ATP = D-ribulose 5-phosphate + ADP + H(+). The enzyme catalyses L-ribulose + ATP = L-ribulose 5-phosphate + ADP + H(+). It participates in carbohydrate degradation; L-arabinose degradation via L-ribulose; D-xylulose 5-phosphate from L-arabinose (bacterial route): step 2/3. The sequence is that of Ribulokinase from Staphylococcus aureus (strain Mu3 / ATCC 700698).